A 524-amino-acid chain; its full sequence is Leukotriene-B4 omega-hydroxylase 3 (524 aa).

The heme site is built by Glu328 and Cys468.

The protein belongs to the cytochrome P450 family. Heme serves as cofactor.

Its subcellular location is the endoplasmic reticulum membrane. It is found in the microsome membrane. It catalyses the reaction leukotriene B4 + reduced [NADPH--hemoprotein reductase] + O2 = 20-hydroxy-leukotriene B4 + oxidized [NADPH--hemoprotein reductase] + H2O + H(+). It functions in the pathway lipid metabolism; leukotriene B4 degradation. Cytochromes P450 are a group of heme-thiolate monooxygenases. Catalyzes the omega-hydroxylation of LTB4. The protein is Leukotriene-B4 omega-hydroxylase 3 (Cyp4f14) of Mus musculus (Mouse).